We begin with the raw amino-acid sequence, 956 residues long: uncharacterized protein (956 aa).

The stretch at 918–942 (NSINEAIEKLNEAADAYQAIIDQQK) forms a coiled coil.

This is an uncharacterized protein from Acanthamoeba polyphaga (Amoeba).